An 85-amino-acid chain; its full sequence is Large ribosomal subunit protein bL31B (85 aa).

Belongs to the bacterial ribosomal protein bL31 family. Type B subfamily. In terms of assembly, part of the 50S ribosomal subunit.

This is Large ribosomal subunit protein bL31B from Vibrio cholerae serotype O1 (strain ATCC 39541 / Classical Ogawa 395 / O395).